The sequence spans 344 residues: G-protein coupled receptor str-217 (344 aa).

Residues 1–10 (MLLFQKTLSR) are Extracellular-facing. Residues 11–31 (VAAPISVAANLILILLIIFKS) traverse the membrane as a helical segment. At 32–39 (PAQMGNYK) the chain is on the cytoplasmic side. The helical transmembrane segment at 40–60 (YLLIGLSIFEMSYAVLDVVSE) threads the bilayer. Topologically, residues 61–88 (TTVLSIKKSFVVVVPYKDRSFGQETAMD) are extracellular. Residues 89-109 (INLIYCGFFGFSMGMFVVIFA) form a helical membrane-spanning segment. Topologically, residues 110–128 (YRSFLTTGNTILRKFEGFK) are cytoplasmic. A helical membrane pass occupies residues 129–149 (IISWFAYPLFYAIVWILVAWG). The Extracellular segment spans residues 150 to 195 (PLASFPEMDIVVRPFLLDELNMTVDEVAYTGRLFYSTIDNSLRYSA). Asn170 carries N-linked (GlcNAc...) asparagine glycosylation. A helical membrane pass occupies residues 196–216 (ILTGVLQWVLTASSLFLVIFF). The Cytoplasmic portion of the chain corresponds to 217–256 (GLRCYFHYGKLVQLTDVQSIRLRQLQNQLFLALVCQATVP). The helical transmembrane segment at 257–277 (LILMHIPVTILYTCCVLNIVF) threads the bilayer. At 278–279 (NP) the chain is on the extracellular side. A helical transmembrane segment spans residues 280–300 (FSVATTIALFPAIDPLPTIFI). The Cytoplasmic segment spans residues 301-344 (VKNYRVALFEFVCPSCLCWSETLKHMGSNRITSYRSNTVNALSM).

This sequence belongs to the nematode receptor-like protein str family. Expressed in the ADL chemosensory neurons.

The protein resides in the cell membrane. Probable G-protein coupled receptor. This Caenorhabditis elegans protein is G-protein coupled receptor str-217.